A 272-amino-acid chain; its full sequence is MGNTTSDRVSGERHGAKAARSEGAGGHAPGKEHKIMVGSTDDPSVFSLPDSKLPGDKEFVSWQQDLEDSVKPTQQARPTVIRWSEGGKEVFISGSFNNWSTKIPLIKSHNDFVAILDLPEGEHQYKFFVDGQWVHDPSEPVVTSQLGTINNLIHVKKSDFEVFDALKLDSMESSETSCRDLSSSPPGPYGQEMYAFRSEERFKSPPILPPHLLQVILNKDTNISCDPALLPEPNHVMLNHLYALSIKDSVMVLSATHRYKKKYVTTLLYKPI.

The disordered stretch occupies residues 1–52 (MGNTTSDRVSGERHGAKAARSEGAGGHAPGKEHKIMVGSTDDPSVFSLPDSK). The residue at position 39 (Ser-39) is a Phosphoserine. Thr-40 is modified (phosphothreonine). Ser-69 carries the post-translational modification Phosphoserine; by ULK1. 2 positions are modified to phosphoserine: Ser-95 and Ser-108. The residue at position 148 (Thr-148) is a Phosphothreonine. 4 positions are modified to phosphoserine: Ser-158, Ser-170, Ser-174, and Ser-184.

Belongs to the 5'-AMP-activated protein kinase beta subunit family. In terms of assembly, AMPK is a heterotrimer of an alpha catalytic subunit (PRKAA1 or PRKAA2), a beta (PRKAB1 or PRKAB2) and a gamma non-catalytic subunits (PRKAG1, PRKAG2 or PRKAG3). In terms of processing, phosphorylated when associated with the catalytic subunit (PRKAA1 or PRKAA2). Phosphorylated by ULK1 and ULK2; leading to negatively regulate AMPK activity and suggesting the existence of a regulatory feedback loop between ULK1, ULK2 and AMPK.

In terms of biological role, non-catalytic subunit of AMP-activated protein kinase (AMPK), an energy sensor protein kinase that plays a key role in regulating cellular energy metabolism. In response to reduction of intracellular ATP levels, AMPK activates energy-producing pathways and inhibits energy-consuming processes: inhibits protein, carbohydrate and lipid biosynthesis, as well as cell growth and proliferation. AMPK acts via direct phosphorylation of metabolic enzymes, and by longer-term effects via phosphorylation of transcription regulators. Also acts as a regulator of cellular polarity by remodeling the actin cytoskeleton; probably by indirectly activating myosin. Beta non-catalytic subunit acts as a scaffold on which the AMPK complex assembles, via its C-terminus that bridges alpha (PRKAA1 or PRKAA2) and gamma subunits (PRKAG1, PRKAG2 or PRKAG3). The polypeptide is 5'-AMP-activated protein kinase subunit beta-2 (PRKAB2) (Homo sapiens (Human)).